Here is a 63-residue protein sequence, read N- to C-terminus: Large ribosomal subunit protein bL35 (63 aa).

2 stretches are compositionally biased toward basic residues: residues 1–25 (MPKMKSKSSAAKRFKKTANGFKHRQ) and 32–47 (LTKKSTKRKRHLRPKK). A disordered region spans residues 1–55 (MPKMKSKSSAAKRFKKTANGFKHRQSFTSHILTKKSTKRKRHLRPKKQVNPSDVP).

Belongs to the bacterial ribosomal protein bL35 family.

In Hahella chejuensis (strain KCTC 2396), this protein is Large ribosomal subunit protein bL35.